The following is a 1279-amino-acid chain: ATP-dependent helicase/nuclease subunit A (1279 aa).

One can recognise a UvrD-like helicase ATP-binding domain in the interval 4 to 499 (TKWTDEQRQA…VKLFKNFRSR (496 aa)). 25 to 32 (AGAGAGKT) lines the ATP pocket. A UvrD-like helicase C-terminal domain is found at 526-853 (EEALKVGASY…RIMSIHKSKG (328 aa)).

This sequence belongs to the helicase family. AddA subfamily. In terms of assembly, heterodimer of AddA and AddB/RexB. The cofactor is Mg(2+).

The catalysed reaction is Couples ATP hydrolysis with the unwinding of duplex DNA by translocating in the 3'-5' direction.. It catalyses the reaction ATP + H2O = ADP + phosphate + H(+). Functionally, the heterodimer acts as both an ATP-dependent DNA helicase and an ATP-dependent, dual-direction single-stranded exonuclease. Recognizes the chi site generating a DNA molecule suitable for the initiation of homologous recombination. The AddA nuclease domain is required for chi fragment generation; this subunit has the helicase and 3' -&gt; 5' nuclease activities. This is ATP-dependent helicase/nuclease subunit A from Clostridium botulinum (strain Okra / Type B1).